The following is a 265-amino-acid chain: Small ribosomal subunit protein eS4 (265 aa).

The S4 RNA-binding domain occupies 42 to 104; it reads LPLILIIRNR…TNENYRLLYD (63 aa).

This sequence belongs to the eukaryotic ribosomal protein eS4 family.

It is found in the cytoplasm. The chain is Small ribosomal subunit protein eS4 (RPS4) from Zea mays (Maize).